Here is a 376-residue protein sequence, read N- to C-terminus: Chanoclavine-I aldehyde reductase easA (376 aa).

Residues 29–31 (PTT), Ala-64, Gln-106, and His-173 each bind FMN. The substrate site is built by His-173 and Asn-176. Residue Tyr-178 is the Proton donor of the active site. Residues Lys-225, Gly-297, 323–324 (GR), and Arg-324 each bind FMN. Tyr-351 contributes to the substrate binding site.

This sequence belongs to the NADH:flavin oxidoreductase/NADH oxidase family. Requires FMN as cofactor.

The enzyme catalyses dihydrochanoclavine-I aldehyde + NADP(+) = chanoclavine-I aldehyde + NADPH + H(+). Its pathway is alkaloid biosynthesis; ergot alkaloid biosynthesis. Functionally, aldehyde reductase; part of the gene cluster that mediates the biosynthesis of fumiclavanine C, a fungal ergot alkaloid. DmaW catalyzes the first step of ergot alkaloid biosynthesis by condensing dimethylallyl diphosphate (DMAP) and tryptophan to form 4-dimethylallyl-L-tryptophan. The second step is catalyzed by the methyltransferase easF that methylates 4-dimethylallyl-L-tryptophan in the presence of S-adenosyl-L-methionine, resulting in the formation of 4-dimethylallyl-L-abrine. The catalase easC and the FAD-dependent oxidoreductase easE then transform 4-dimethylallyl-L-abrine to chanoclavine-I which is further oxidized by EasD in the presence of NAD(+), resulting in the formation of chanoclavine-I aldehyde. EasA reduces chanoclavine-I aldehyde to dihydrochanoclavine-I aldehyde that spontaneously dehydrates to form 6,8-dimethyl-6,7-didehydroergoline. EasG then catalyzes the reduction of 6,8-dimethyl-6,7-didehydroergoline to form festuclavine. Hydrolysis of festuclavine by easM then leads to the formation of fumigaclavine B which is in turn acetylated by easN to fumigaclavine A. Finally, easL catalyzes the conversion of fumigaclavine A into fumigaclavine C by attaching a dimethylallyl moiety to C-2 of the indole nucleus. This chain is Chanoclavine-I aldehyde reductase easA, found in Aspergillus fumigatus (strain ATCC MYA-4609 / CBS 101355 / FGSC A1100 / Af293) (Neosartorya fumigata).